We begin with the raw amino-acid sequence, 312 residues long: HTH-type transcriptional regulator TdcA (312 aa).

Positions 7-64 constitute an HTH lysR-type domain; it reads PKTQHLVVFQEVIRSGSIGSAAKELGLTQPAVSKIINDIEDYFGVELVVRKNTGVTLT. A DNA-binding region (H-T-H motif) is located at residues 24–43; sequence IGSAAKELGLTQPAVSKIIN.

It belongs to the LysR transcriptional regulatory family.

The protein operates within amino-acid degradation; L-threonine degradation via propanoate pathway [regulation]. Functionally, transcriptional activator for the tdcABCDE operon. This Escherichia coli O157:H7 protein is HTH-type transcriptional regulator TdcA (tdcA).